The sequence spans 184 residues: Peptide deformylase (184 aa).

Fe cation-binding residues include Cys-96 and His-138. The active site involves Glu-139. His-142 lines the Fe cation pocket.

This sequence belongs to the polypeptide deformylase family. It depends on Fe(2+) as a cofactor.

The enzyme catalyses N-terminal N-formyl-L-methionyl-[peptide] + H2O = N-terminal L-methionyl-[peptide] + formate. In terms of biological role, removes the formyl group from the N-terminal Met of newly synthesized proteins. Requires at least a dipeptide for an efficient rate of reaction. N-terminal L-methionine is a prerequisite for activity but the enzyme has broad specificity at other positions. This is Peptide deformylase from Cytophaga hutchinsonii (strain ATCC 33406 / DSM 1761 / CIP 103989 / NBRC 15051 / NCIMB 9469 / D465).